Here is a 20-residue protein sequence, read N- to C-terminus: Phospholipase A2 D5 (20 aa).

Ca(2+) is required as a cofactor. Post-translationally, contains seven disulfide bonds. Expressed by the venom gland.

The protein localises to the secreted. The catalysed reaction is a 1,2-diacyl-sn-glycero-3-phosphocholine + H2O = a 1-acyl-sn-glycero-3-phosphocholine + a fatty acid + H(+). In terms of biological role, PLA2 catalyzes the calcium-dependent hydrolysis of the 2-acyl groups in 3-sn-phosphoglycerides. The sequence is that of Phospholipase A2 D5 from Micrurus pyrrhocryptus (Coral snake).